Consider the following 752-residue polypeptide: DNA topoisomerase 4 subunit A (752 aa).

One can recognise a Topo IIA-type catalytic domain in the interval 31–494; that stretch reads LPFIGDGLKP…EAKAMSEHDM (464 aa). The active-site O-(5'-phospho-DNA)-tyrosine intermediate is the tyrosine 120. Disordered stretches follow at residues 472-492 and 718-752; these read YGDDRRSPLQEREEAKAMSEH and TGERGRRGTLMRGLQRIDRVEIDSPRRASSGDSEE. 2 stretches are compositionally biased toward basic and acidic residues: residues 473 to 492 and 732 to 743; these read GDDRRSPLQEREEAKAMSEH and QRIDRVEIDSPR.

It belongs to the type II topoisomerase GyrA/ParC subunit family. ParC type 1 subfamily. Heterotetramer composed of ParC and ParE.

The protein localises to the cell membrane. The catalysed reaction is ATP-dependent breakage, passage and rejoining of double-stranded DNA.. Topoisomerase IV is essential for chromosome segregation. It relaxes supercoiled DNA. Performs the decatenation events required during the replication of a circular DNA molecule. The sequence is that of DNA topoisomerase 4 subunit A from Escherichia coli O157:H7.